The following is a 2096-amino-acid chain: HEAT repeat-containing protein 1 homolog (2096 aa).

One copy of the HEAT repeat lies at 2058–2096 (TVPFIAELLEDEHQRVEKNTRTGVQELETILGESVQKYL).

Belongs to the HEATR1/UTP10 family. Part of the small subunit (SSU) processome, composed of more than 70 proteins and the RNA chaperone small nucleolar RNA (snoRNA) U3. Interacts with MYC; the interaction is required for localization of MYC to the nucleolus.

The protein localises to the nucleus. The protein resides in the nucleolus. Functionally, ribosome biogenesis factor; required for recruitment of Myc to nucleoli. Involved in nucleolar processing of pre-18S ribosomal RNA. Required for optimal pre-ribosomal RNA transcription by RNA polymerase I. Part of the small subunit (SSU) processome, first precursor of the small eukaryotic ribosomal subunit. During the assembly of the SSU processome in the nucleolus, many ribosome biogenesis factors, an RNA chaperone and ribosomal proteins associate with the nascent pre-rRNA and work in concert to generate RNA folding, modifications, rearrangements and cleavage as well as targeted degradation of pre-ribosomal RNA by the RNA exosome. Involved in neuronal-lineage cell proliferation during larval development. In Drosophila melanogaster (Fruit fly), this protein is HEAT repeat-containing protein 1 homolog.